The chain runs to 3172 residues: Erythronolide synthase EryA3 (3172 aa).

Residues 38–452 (GEPIAIVGMA…GTNAHVIVEE (415 aa)) form the Ketosynthase family 3 (KS3) 1 domain. Module regions lie at residues 41-1464 (IAIV…DHYL) and 1492-2891 (IAIV…DHIG). Cysteine 199 functions as the Acyl-thioester intermediate; for beta-ketoacyl synthase 1 activity in the catalytic mechanism. Residues histidine 334 and histidine 374 each act as for beta-ketoacyl synthase 1 activity in the active site. The acyltransferase 1 stretch occupies residues 557–874 (VFPGQGAQWQ…LGEAYAQGVE (318 aa)). Serine 643 (acyl-ester intermediate; for acyltransferase 1 activity) is an active-site residue. The tract at residues 1117–1294 (GTVLVTGGTG…VTSIAWGLWA (178 aa)) is beta-ketoacyl reductase 1. NADP(+) is bound by residues 1125 to 1128 (TGGI), 1148 to 1151 (GRRG), 1177 to 1178 (DV), lysine 1229, and 1249 to 1250 (FS). The active-site Acyl-ester intermediate; for beta-ketoacyl reductase 1 activity is tyrosine 1264. One can recognise a Carrier 1 domain in the interval 1392 to 1467 (EHLAHLIRAE…RLADHYLERL (76 aa)). At serine 1427 the chain carries O-(pantetheine 4'-phosphoryl)serine. The region spanning 1489 to 1916 (DDPIAIVGMA…GTNAHVIIAE (428 aa)) is the Ketosynthase family 3 (KS3) 2 domain. Residue cysteine 1661 is the Acyl-thioester intermediate; for beta-ketoacyl synthase 2 activity of the active site. Catalysis depends on for beta-ketoacyl synthase 2 activity residues histidine 1797 and histidine 1837. Positions 2022 to 2331 (VFVFPGQGAQ…LARAHVHGVA (310 aa)) are acyltransferase 2. Catalysis depends on serine 2112, which acts as the Acyl-ester intermediate; for acyltransferase 2 activity. The interval 2557-2731 (GTALVTGGTG…ATSVAWGAWA (175 aa)) is beta-ketoacyl reductase 2. NADP(+) is bound by residues 2565–2568 (TGAL), 2588–2591 (SRRG), 2617–2618 (DV), lysine 2666, and 2686–2687 (FS). Catalysis depends on tyrosine 2701, which acts as the Acyl-ester intermediate; for beta-ketoacyl reductase 2 activity. Residues 2819–2894 (QELLEFTHSH…RLADHIGQQL (76 aa)) enclose the Carrier 2 domain. Serine 2854 bears the O-(pantetheine 4'-phosphoryl)serine mark. Residues 2960 to 3166 (ICCAGTAAIS…DAIARHIDAW (207 aa)) are thioesterase. Threonine 2965 is a binding site for substrate. The active-site Nucleophile; for thioesterase activity is the serine 3031. Residues alanine 3032 and aspartate 3058 each contribute to the substrate site. Histidine 3148 (proton acceptor; for thioesterase activity) is an active-site residue.

Homodimer. Erythronolide synthase is composed of EryAI, EryAII and EryAIII multimodular (2 modules) polypeptides each coding for a functional synthase subunit which participates in 2 of the six FAS-like elongation steps required for formation of the polyketide. Module 1, 2, 3, 4, 5, and 6 participating in biosynthesis steps 1, 2, 3, 4, 5, and 6, respectively. Pantetheine 4'-phosphate is required as a cofactor.

The enzyme catalyses 6 (S)-methylmalonyl-CoA + propanoyl-CoA + 6 NADPH + 12 H(+) = 6-deoxyerythronolide B + 6 CO2 + 6 NADP(+) + 7 CoA + H2O. It functions in the pathway antibiotic biosynthesis; erythromycin biosynthesis. Inhibited by diphenyl phosphonates derivatives such as diphenyl allylphosphonate. Involved in the biosynthesis of antibiotic erythromycin via the biosynthesis of its aglycone precursor, 6-deoxyerythronolide B (6-dEB). This is Erythronolide synthase EryA3 from Saccharopolyspora erythraea (Streptomyces erythraeus).